The following is a 247-amino-acid chain: MLTQVLFEHPLNEKMRTWLRIEFLIQQLSVNLPVADHAGALHFFRNIADLLDVFERGEVRTELLKELERQQRKLQAWIEVPGVDQDRIEALRTELKNAGSILISAPRIGQFLREDRLIALVRQRLSIPGGCCSFDLPTLHIWLHMPQAMRDAQIETWLASLSPLNHALTLVLDLIRNSVPFRKQTSLNGFYQDNGEDADLLRLQLPLDSQLYPQISGHKSRFAIRFMPLDSENGLVPERLDFELACC.

It belongs to the ZapD family. In terms of assembly, interacts with FtsZ.

Its subcellular location is the cytoplasm. Functionally, cell division factor that enhances FtsZ-ring assembly. Directly interacts with FtsZ and promotes bundling of FtsZ protofilaments, with a reduction in FtsZ GTPase activity. In Escherichia fergusonii (strain ATCC 35469 / DSM 13698 / CCUG 18766 / IAM 14443 / JCM 21226 / LMG 7866 / NBRC 102419 / NCTC 12128 / CDC 0568-73), this protein is Cell division protein ZapD.